Here is a 191-residue protein sequence, read N- to C-terminus: Small ribosomal subunit protein uS5 (191 aa).

Residues 1 to 20 (MAAERERGGRERSRDREERD) are disordered. One can recognise an S5 DRBM domain in the interval 23–86 (FVDKLVHINR…EAAKRNLTRV (64 aa)).

This sequence belongs to the universal ribosomal protein uS5 family. In terms of assembly, part of the 30S ribosomal subunit. Contacts proteins S4 and S8.

In terms of biological role, with S4 and S12 plays an important role in translational accuracy. Its function is as follows. Located at the back of the 30S subunit body where it stabilizes the conformation of the head with respect to the body. The chain is Small ribosomal subunit protein uS5 from Rhodopseudomonas palustris (strain HaA2).